We begin with the raw amino-acid sequence, 466 residues long: Ribulose bisphosphate carboxylase large chain (466 aa).

Lys5 carries the N6,N6,N6-trimethyllysine modification. 2 residues coordinate substrate: Asn114 and Thr164. Lys166 functions as the Proton acceptor in the catalytic mechanism. Lys168 provides a ligand contact to substrate. Residues Lys192, Asp194, and Glu195 each coordinate Mg(2+). N6-carboxylysine is present on Lys192. The active-site Proton acceptor is the His285. Substrate is bound by residues Arg286, His318, and Ser370.

The protein belongs to the RuBisCO large chain family. Type I subfamily. Heterohexadecamer of 8 large chains and 8 small chains; disulfide-linked. The disulfide link is formed within the large subunit homodimers. Requires Mg(2+) as cofactor. In terms of processing, the disulfide bond which can form in the large chain dimeric partners within the hexadecamer appears to be associated with oxidative stress and protein turnover.

The protein localises to the plastid. Its subcellular location is the chloroplast. It catalyses the reaction 2 (2R)-3-phosphoglycerate + 2 H(+) = D-ribulose 1,5-bisphosphate + CO2 + H2O. The catalysed reaction is D-ribulose 1,5-bisphosphate + O2 = 2-phosphoglycolate + (2R)-3-phosphoglycerate + 2 H(+). Functionally, ruBisCO catalyzes two reactions: the carboxylation of D-ribulose 1,5-bisphosphate, the primary event in carbon dioxide fixation, as well as the oxidative fragmentation of the pentose substrate in the photorespiration process. Both reactions occur simultaneously and in competition at the same active site. This Berzelia lanuginosa (Buttonbush) protein is Ribulose bisphosphate carboxylase large chain.